A 406-amino-acid polypeptide reads, in one-letter code: Phosphopentomutase (406 aa).

Mn(2+) is bound by residues D10, D305, H310, D346, H347, and H358.

The protein belongs to the phosphopentomutase family. Mn(2+) serves as cofactor.

It localises to the cytoplasm. The enzyme catalyses 2-deoxy-alpha-D-ribose 1-phosphate = 2-deoxy-D-ribose 5-phosphate. The catalysed reaction is alpha-D-ribose 1-phosphate = D-ribose 5-phosphate. The protein operates within carbohydrate degradation; 2-deoxy-D-ribose 1-phosphate degradation; D-glyceraldehyde 3-phosphate and acetaldehyde from 2-deoxy-alpha-D-ribose 1-phosphate: step 1/2. In terms of biological role, isomerase that catalyzes the conversion of deoxy-ribose 1-phosphate (dRib-1-P) and ribose 1-phosphate (Rib-1-P) to deoxy-ribose 5-phosphate (dRib-5-P) and ribose 5-phosphate (Rib-5-P), respectively. This is Phosphopentomutase from Sinorhizobium medicae (strain WSM419) (Ensifer medicae).